The sequence spans 149 residues: Major outer capsid protein (149 aa).

Homotrimer.

The protein resides in the virion. Its function is as follows. Assembles to form an icosahedral capsid with a T=13 symmetry. Drives the penetration of the inner capsid (core) into the cytoplasm. The chain is Major outer capsid protein (P8) from Pseudomonas phage phi6 (Bacteriophage phi-6).